Here is a 1690-residue protein sequence, read N- to C-terminus: DNA-directed RNA polymerase subunit beta' (1690 aa).

The Zn(2+) site is built by Cys-63, Cys-65, Cys-78, and Cys-81. Mg(2+) contacts are provided by Asp-753, Asp-755, and Asp-757. Zn(2+) is bound by residues Cys-1107, Cys-1295, Cys-1302, and Cys-1305.

The protein belongs to the RNA polymerase beta' chain family. The RNAP catalytic core consists of 2 alpha, 1 beta, 1 beta' and 1 omega subunit. When a sigma factor is associated with the core the holoenzyme is formed, which can initiate transcription. Mg(2+) is required as a cofactor. It depends on Zn(2+) as a cofactor.

The catalysed reaction is RNA(n) + a ribonucleoside 5'-triphosphate = RNA(n+1) + diphosphate. DNA-dependent RNA polymerase catalyzes the transcription of DNA into RNA using the four ribonucleoside triphosphates as substrates. This is DNA-directed RNA polymerase subunit beta' from Thermotoga neapolitana (strain ATCC 49049 / DSM 4359 / NBRC 107923 / NS-E).